Consider the following 232-residue polypeptide: 7-cyano-7-deazaguanine synthase (232 aa).

8–18 contributes to the ATP binding site; it reads FSGGQDSTTCL. The Zn(2+) site is built by C187, C196, C199, and C202.

Belongs to the QueC family. The cofactor is Zn(2+).

It catalyses the reaction 7-carboxy-7-deazaguanine + NH4(+) + ATP = 7-cyano-7-deazaguanine + ADP + phosphate + H2O + H(+). It functions in the pathway purine metabolism; 7-cyano-7-deazaguanine biosynthesis. Its function is as follows. Catalyzes the ATP-dependent conversion of 7-carboxy-7-deazaguanine (CDG) to 7-cyano-7-deazaguanine (preQ(0)). This Vibrio vulnificus (strain YJ016) protein is 7-cyano-7-deazaguanine synthase.